Here is a 315-residue protein sequence, read N- to C-terminus: Cysteine proteinase 1 (315 aa).

Residues 1-13 (MFTFILMFYIGYG) form the signal peptide. A propeptide spans 14–93 (IDFNTWVANN…KGEVRYLNIQ (80 aa)) (activation peptide). 2 disulfides stabilise this stretch: cysteine 115–cysteine 161 and cysteine 152–cysteine 193. Cysteine 118 is an active-site residue. Active-site residues include histidine 259 and asparagine 279.

Belongs to the peptidase C1 family.

It localises to the lysosome. Inhibited by cysteine protease inhibitors ICP1 and ICP2. Functionally, cysteine protease which degrades matrix proteins such as collagen, laminin and fibronectin and thus is involved in the destruction of human tissue. Can abolish adhesion. May play an important role in pathogenicity. This Entamoeba histolytica (strain ATCC 30459 / HM-1:IMSS / ABRM) protein is Cysteine proteinase 1.